Consider the following 368-residue polypeptide: Agmatine deiminase (368 aa).

Cysteine 357 (amidino-cysteine intermediate) is an active-site residue.

The protein belongs to the agmatine deiminase family. Homodimer.

The catalysed reaction is agmatine + H2O = N-carbamoylputrescine + NH4(+). Its pathway is amine and polyamine biosynthesis; putrescine biosynthesis via agmatine pathway; N-carbamoylputrescine from agmatine: step 1/1. In terms of biological role, mediates the hydrolysis of agmatine into N-carbamoylputrescine in the arginine decarboxylase (ADC) pathway of putrescine biosynthesis, a basic polyamine. This Pseudomonas fluorescens (strain ATCC BAA-477 / NRRL B-23932 / Pf-5) protein is Agmatine deiminase.